The primary structure comprises 1113 residues: MHTTRSPSASIQAGAAGDALDLSLNGSQLTMGRRPSSASPGKHFSRSISVSVAYDGRGKRNTLTDAGLGSSRAIKNLRRSNSTTQVNQQANTSLSSEGHTEDFLALFNSSSDGRRKLASLSKMSKDRTTWNILDDQPRVFPVPSSSHSTCSMDSPTGLKKREAGVSLAANFTANNRSNKAAVGNAVTAILHNNHSEKPLTPKSSNQKPSFNNLIKATVNDDVTLDVSGSLTKSQKNFSSASSSSNNNAPRSPRSPGQPRRREVTEEEAERYIQQVNHAAIIIQRWYRRHVNSKRANENIIKQLLASKKKEREQRAEEAKTTESLKKKEDDRKRIREEKARLARLTAIQELQQKRAQRAAEVQQIAEQETEALRHPGKVGRKKLTKSSPTSPTDIKAKNTDSNVNVVSDLDDVTNLRAASPAGSACRVSQCSQEILQRSVSMEDQRQGASSSRAQSKTTLNDLLDTLKLLEEEPERLSEPKSYRKDKYSWIDEDGDSNSLTTDNVERHRQLSQTPALPDGGALLSEAKLQSIMSFLDEMEKSEQERPRSVTSGSHREVVLSEEDLAVVEQASATAAEVTGSMMRLRLELDEKKRTVNMLQTALAQQRELTIRHVKETEKELNHTFQLQKEQYEATIQRHLTFIDQLIDDKKALSERCEEVVGELKQVDQKYTKKIAQMQEQHELVWQILGPMCEEIKKLKELMSATEKVRREKWINEKTKKIKEITVKGLEPEIQKLISKHKQELKKLRVLHEAELLQADERAAQRYVRQSEELRQQLEKEKDEQCQRERELAKQRFEKQLQEEENVLQQQRRRLYKEVSEEKERLTQLAARQHAELEDLRKQLEDNSSLAGRALREELEKSRDEQERRHQVEIKALKERLEIEKQTWEENYMKKEEAWLLSRERELKEEVRRGRDKEIELAIQRLEVETREAREECERAADNRMKRVREKYEAELRDLERSERTSLQKQQEMREKHSEMEAELLRLQSLLRQREQEISDLTQVTARDKLSEERRSLSEVIRQEFAERLIELEEENRRMKMEVSEAKARLRLEVERVTREKEEELAEVHQRVKSAILKKEETVNNLRKQHEAAVKRADHLESLLEQQRKQLLGK.

2 disordered regions span residues 78–97 and 232–267; these read RRSNSTTQVNQQANTSLSSE and KSQKNFSSASSSSNNNAPRSPRSPGQPRRREVTEEE. Polar residues predominate over residues 79 to 97; the sequence is RSNSTTQVNQQANTSLSSE. The span at 238–257 shows a compositional bias: low complexity; the sequence is SSASSSSNNNAPRSPRSPGQ. Residues 259 to 371 are a coiled coil; it reads RRREVTEEEA…QQIAEQETEA (113 aa). In terms of domain architecture, IQ spans 276–296; the sequence is NHAAIIIQRWYRRHVNSKRAN. 3 disordered regions span residues 306–331, 368–401, and 438–458; these read SKKKEREQRAEEAKTTESLKKKEDDR, ETEALRHPGKVGRKKLTKSSPTSPTDIKAKNTDS, and SVSMEDQRQGASSSRAQSKTT. Over residues 307 to 331 the composition is skewed to basic and acidic residues; that stretch reads KKKEREQRAEEAKTTESLKKKEDDR. The span at 374-384 shows a compositional bias: basic residues; the sequence is HPGKVGRKKLT. The segment covering 446–458 has biased composition (low complexity); it reads QGASSSRAQSKTT. Residues 580–1111 adopt a coiled-coil conformation; it reads SMMRLRLELD…LLEQQRKQLL (532 aa).

Belongs to the CEP131 family.

The protein localises to the chromosome. It localises to the centromere. It is found in the cytoplasm. The protein resides in the cytoskeleton. Its subcellular location is the microtubule organizing center. The protein localises to the centrosome. It localises to the centriolar satellite. It is found in the cilium basal body. The protein resides in the cytoplasmic vesicle. Its subcellular location is the secretory vesicle. The protein localises to the acrosome. Functionally, cilium-specific protein required for the regulation of cilium/flagellum formation. Involved in centriole duplication. May play a role in melanosome trafficking. The polypeptide is Centrosomal protein of 131 kDa (cep131) (Danio rerio (Zebrafish)).